The following is a 268-amino-acid chain: MIALDHLRHVNVEAARTARARYRAGTVEPTSGIAPGFTQANMIVLPRDWAFDFLLYAQRNPRACPVLDVSDPGSHTTLLAPGADLRKDLPLYRVWRDGKLAEETTDATAAWGEHPDLVSFLIGCSFTFETPMVEAGIEIRHITDRSNVPMYLTNKACRPAGRLRGNMVVSMRPIPASRVADAATISGRFPAVHGAPVHVGAPEEIGIKDLAKPEFGDPVRIEPGEIPVFWACGVTPQAAVMASGVPFAITHAPGHMFITNIPDSAYHA.

Belongs to the D-glutamate cyclase family.

This chain is Putative hydro-lyase Arad_8587, found in Rhizobium rhizogenes (strain K84 / ATCC BAA-868) (Agrobacterium radiobacter).